A 241-amino-acid chain; its full sequence is Demethylmenaquinone methyltransferase (241 aa).

2 residues coordinate S-adenosyl-L-methionine: Thr73 and Asp92.

This sequence belongs to the class I-like SAM-binding methyltransferase superfamily. MenG/UbiE family.

The enzyme catalyses a 2-demethylmenaquinol + S-adenosyl-L-methionine = a menaquinol + S-adenosyl-L-homocysteine + H(+). Its pathway is quinol/quinone metabolism; menaquinone biosynthesis; menaquinol from 1,4-dihydroxy-2-naphthoate: step 2/2. Functionally, methyltransferase required for the conversion of demethylmenaquinol (DMKH2) to menaquinol (MKH2). The chain is Demethylmenaquinone methyltransferase from Chlorobaculum parvum (strain DSM 263 / NCIMB 8327) (Chlorobium vibrioforme subsp. thiosulfatophilum).